The primary structure comprises 505 residues: MKDTEKYLIHANIAADGVVERSDVVGAVFGQTEGLLGDELDLRDLQESSRVGRIDVAVESENGQSFGEVTVASSLDKVETAILAAALETIDRIGPCHASVEVTSIEDVRAAKRREVVERAKELVAGGFEETSLASDDILDEVREAARVEGIVDYEGLPAGPRVGDSDAVIVVEGRADVLTLLECGIKNAVAVEGTNVPDAVADLTADRTVTAFLDGDRGGELILRELAQVGDVDYVAFAPPGESVEDLDRNTVFEALRGKVPYSSLADEPNLREAATDDSGSAPIDNEGRGRSGEMSEPSESETESERASDGGDDGDAGVVAGGARSATDRGLVDAVEDTPAPAATDAGEVDEVGEDREGDMESDSDTADINDAEFDDRAADDPNLDEAADAESVEETDAPLDNEPRSIEEHVQEIVDAGSDRARLLGDDRGVLAEIDAVDAFDAIEDAETAPHTVVVDGLIDQRLLDVAAQRGVSELLGREVGEFVKRPVGTRVLTVGDLRTGS.

The 75-residue stretch at 167–241 folds into the Toprim domain; the sequence is DAVIVVEGRA…DVDYVAFAPP (75 aa). Mg(2+) is bound by residues Glu173, Asp215, and Asp217. A disordered region spans residues 268–410; sequence DEPNLREAAT…PLDNEPRSIE (143 aa). Over residues 318–327 the composition is skewed to low complexity; it reads AGVVAGGARS. Composition is skewed to acidic residues over residues 349 to 376 and 384 to 402; these read GEVDEVGEDREGDMESDSDTADINDAEF and PNLDEAADAESVEETDAPL.

Belongs to the archaeal DnaG primase family. As to quaternary structure, forms a ternary complex with MCM helicase and DNA. The cofactor is Mg(2+).

The enzyme catalyses ssDNA + n NTP = ssDNA/pppN(pN)n-1 hybrid + (n-1) diphosphate.. RNA polymerase that catalyzes the synthesis of short RNA molecules used as primers for DNA polymerase during DNA replication. The polypeptide is DNA primase DnaG (Halorubrum lacusprofundi (strain ATCC 49239 / DSM 5036 / JCM 8891 / ACAM 34)).